The primary structure comprises 168 residues: Photosystem I assembly protein Ycf3 (168 aa).

TPR repeat units lie at residues 35–68, 72–105, and 120–153; these read AFTY…EIDP, SYIL…NPFL, and GEQA…TPGN.

Belongs to the Ycf3 family.

The protein resides in the plastid. It is found in the chloroplast thylakoid membrane. In terms of biological role, essential for the assembly of the photosystem I (PSI) complex. May act as a chaperone-like factor to guide the assembly of the PSI subunits. This chain is Photosystem I assembly protein Ycf3, found in Buxus microphylla (Littleleaf boxwood).